The primary structure comprises 40 residues: Photosystem II reaction center protein J (40 aa).

A helical membrane pass occupies residues 8–28 (IPLWVIGTVAGILVIGLIGIF).

The protein belongs to the PsbJ family. In terms of assembly, PSII is composed of 1 copy each of membrane proteins PsbA, PsbB, PsbC, PsbD, PsbE, PsbF, PsbH, PsbI, PsbJ, PsbK, PsbL, PsbM, PsbT, PsbX, PsbY, PsbZ, Psb30/Ycf12, at least 3 peripheral proteins of the oxygen-evolving complex and a large number of cofactors. It forms dimeric complexes.

The protein resides in the plastid. Its subcellular location is the chloroplast thylakoid membrane. In terms of biological role, one of the components of the core complex of photosystem II (PSII). PSII is a light-driven water:plastoquinone oxidoreductase that uses light energy to abstract electrons from H(2)O, generating O(2) and a proton gradient subsequently used for ATP formation. It consists of a core antenna complex that captures photons, and an electron transfer chain that converts photonic excitation into a charge separation. The sequence is that of Photosystem II reaction center protein J from Lepidium virginicum (Virginia pepperweed).